Consider the following 526-residue polypeptide: Bifunctional purine biosynthesis protein PurH (526 aa).

The region spanning 1 to 147 (MSVIKRALIS…KNWKHVAIVT (147 aa)) is the MGS-like domain.

The protein belongs to the PurH family.

It catalyses the reaction (6R)-10-formyltetrahydrofolate + 5-amino-1-(5-phospho-beta-D-ribosyl)imidazole-4-carboxamide = 5-formamido-1-(5-phospho-D-ribosyl)imidazole-4-carboxamide + (6S)-5,6,7,8-tetrahydrofolate. It carries out the reaction IMP + H2O = 5-formamido-1-(5-phospho-D-ribosyl)imidazole-4-carboxamide. It functions in the pathway purine metabolism; IMP biosynthesis via de novo pathway; 5-formamido-1-(5-phospho-D-ribosyl)imidazole-4-carboxamide from 5-amino-1-(5-phospho-D-ribosyl)imidazole-4-carboxamide (10-formyl THF route): step 1/1. It participates in purine metabolism; IMP biosynthesis via de novo pathway; IMP from 5-formamido-1-(5-phospho-D-ribosyl)imidazole-4-carboxamide: step 1/1. The polypeptide is Bifunctional purine biosynthesis protein PurH (Neisseria gonorrhoeae (strain ATCC 700825 / FA 1090)).